The following is a 426-amino-acid chain: Glucose-6-phosphate isomerase (426 aa).

The active-site Proton donor is the Glu282. Active-site residues include His303 and Lys417.

This sequence belongs to the GPI family.

It is found in the cytoplasm. The enzyme catalyses alpha-D-glucose 6-phosphate = beta-D-fructose 6-phosphate. It functions in the pathway carbohydrate biosynthesis; gluconeogenesis. Its pathway is carbohydrate degradation; glycolysis; D-glyceraldehyde 3-phosphate and glycerone phosphate from D-glucose: step 2/4. Catalyzes the reversible isomerization of glucose-6-phosphate to fructose-6-phosphate. In Onion yellows phytoplasma (strain OY-M), this protein is Glucose-6-phosphate isomerase.